We begin with the raw amino-acid sequence, 306 residues long: Pantothenate kinase (306 aa).

Residue Gly-91–Ser-98 participates in ATP binding.

Belongs to the prokaryotic pantothenate kinase family.

Its subcellular location is the cytoplasm. It catalyses the reaction (R)-pantothenate + ATP = (R)-4'-phosphopantothenate + ADP + H(+). The protein operates within cofactor biosynthesis; coenzyme A biosynthesis; CoA from (R)-pantothenate: step 1/5. This is Pantothenate kinase from Streptococcus pneumoniae (strain 70585).